We begin with the raw amino-acid sequence, 214 residues long: MSETAPVPQPASVAPEKPAATKKTRKPAKAAVPRKKPAGPSVSELIVQAVSSSKERSGVSLAALKKSLAAAGYDVEKNNSRIKLGLKSLVNKGTLVQTKGTGAAGSFKLNKKAESKASTTKVTVKAKASGAAKKPKKTAGAAAKKTVKTPKKPKKPAVSKKTSSKSPKKPKVVKAKKVAKSPAKAKAVKPKAAKVKVTKPKTPAKPKKAAPKKK.

The interval 1 to 43 (MSETAPVPQPASVAPEKPAATKKTRKPAKAAVPRKKPAGPSVS) is disordered. Ser-2 carries the post-translational modification N-acetylserine. Phosphoserine is present on residues Ser-2 and Ser-12. Residue Lys-17 is modified to N6-acetyllysine. Positions 20 to 37 (ATKKTRKPAKAAVPRKKP) are enriched in basic residues. The residue at position 36 (Lys-36) is an N6-(beta-hydroxybutyryl)lysine. The 74-residue stretch at 38 to 111 (AGPSVSELIV…GAAGSFKLNK (74 aa)) folds into the H15 domain. Phosphoserine is present on Ser-43. At Lys-54 the chain carries N6-(beta-hydroxybutyryl)lysine. Arg-56 carries the post-translational modification Citrulline. Position 66 is an N6-(beta-hydroxybutyryl)lysine (Lys-66). Residue Ser-67 is modified to Phosphoserine. Lys-77 is modified (N6-acetyllysine). At Lys-87 the chain carries N6-(beta-hydroxybutyryl)lysine. The residue at position 92 (Lys-92) is an N6-(beta-hydroxybutyryl)lysine; alternate. N6-acetyllysine; alternate is present on Lys-92. The interval 93-214 (GTLVQTKGTG…KPKKAAPKKK (122 aa)) is disordered. Position 106 is a phosphoserine (Ser-106). N6-(beta-hydroxybutyryl)lysine is present on Lys-108. Low complexity predominate over residues 116–144 (KASTTKVTVKAKASGAAKKPKKTAGAAAK). The residue at position 121 (Lys-121) is an N6-acetyllysine. Basic residues-rich tracts occupy residues 145 to 179 (KTVKTPKKPKKPAVSKKTSSKSPKKPKVVKAKKVA) and 186 to 214 (KAVKPKAAKVKVTKPKTPAKPKKAAPKKK). At Thr-202 the chain carries Phosphothreonine.

Belongs to the histone H1/H5 family. In terms of assembly, interacts with DFFB. Post-translationally, H1 histones are progressively phosphorylated during the cell cycle, becoming maximally phosphorylated during late G2 phase and M phase, and being dephosphorylated sharply thereafter. In terms of processing, citrullination at Arg-56 (H1R54ci) by PADI4 takes place within the DNA-binding site of H1 and results in its displacement from chromatin and global chromatin decondensation, thereby promoting pluripotency and stem cell maintenance.

It is found in the nucleus. Its subcellular location is the chromosome. Functionally, H1 histones bind to linker DNA between nucleosomes forming the macromolecular structure known as the chromatin fiber. H1 histones are necessary for the condensation of nucleosome chains into higher-order structured fibers. Also acts as a regulator of individual gene transcription through chromatin remodeling. The sequence is that of Histone H1.1 from Rattus norvegicus (Rat).